The following is a 206-amino-acid chain: Putative transporter protein AmiS2 (206 aa).

7 helical membrane passes run 4 to 24 (VGLLYVGAVLFVNGLMLLGTV), 29 to 49 (ASVLNLFVGALQCVVPTVMLI), 56 to 76 (SAVLAASGLYLFGFTYLYVGI), 86 to 106 (GIGWFSLFVACAALVYSFLSF), 113 to 133 (VFGVIWLAWAALWTLFFLVLG), 142 to 162 (FTGWAAILLSQPTCTVPAFLI), and 173 to 193 (VAAGWAGALLVLLGLAKILAA).

This sequence belongs to the AmiS/UreI family.

Its subcellular location is the cell membrane. Possible transporter that might be responsible for the adsorption of amidase substrates or release of their hydrolysis products. In Rhodococcus erythropolis (Arthrobacter picolinophilus), this protein is Putative transporter protein AmiS2 (amiS2).